The chain runs to 428 residues: MLDTKYLRNELEFTKERLAARGFALDIDHLKALEEKRKSLQVATEELQASRNAISKSIGQAKSRGEDVAPIMAQVGNLGTELEAKKIELAALLEEINAIAMSVPNLPDESVPVGKDESENVEIRRWGEPRSFDFAVKDHVDLGETLGGLDFKSAVKITGSRFIVMKGQIARMHRALAQFMLDLHTIEHGYTEAYVPLLVNTDSLLGTGQLPKFSEDLFNLKPATEEGQALSLIPTAEVPVTNLVRDTILDEADLPIKITAHTACFRSEAGSYGKDTRGLIRQHQFDKVEMVQIVKPENSMDALEQMVGHAENVLKKLGLPYRTVVLCTGDMGFGAAKTYDIEVWLPAQNTYREISSCSNVKDFQARRMQARYRSKEDNKPALVHTLNGSGLAVGRTLVAILENYQNADGTVTVPEALRPYMGGIEQLG.

235 to 237 contributes to the L-serine binding site; sequence TAE. 266–268 provides a ligand contact to ATP; that stretch reads RSE. Glu289 is a binding site for L-serine. 353 to 356 is an ATP binding site; sequence EISS. Ser389 lines the L-serine pocket.

The protein belongs to the class-II aminoacyl-tRNA synthetase family. Type-1 seryl-tRNA synthetase subfamily. Homodimer. The tRNA molecule binds across the dimer.

Its subcellular location is the cytoplasm. The catalysed reaction is tRNA(Ser) + L-serine + ATP = L-seryl-tRNA(Ser) + AMP + diphosphate + H(+). It catalyses the reaction tRNA(Sec) + L-serine + ATP = L-seryl-tRNA(Sec) + AMP + diphosphate + H(+). Its pathway is aminoacyl-tRNA biosynthesis; selenocysteinyl-tRNA(Sec) biosynthesis; L-seryl-tRNA(Sec) from L-serine and tRNA(Sec): step 1/1. Catalyzes the attachment of serine to tRNA(Ser). Is also able to aminoacylate tRNA(Sec) with serine, to form the misacylated tRNA L-seryl-tRNA(Sec), which will be further converted into selenocysteinyl-tRNA(Sec). In Shewanella amazonensis (strain ATCC BAA-1098 / SB2B), this protein is Serine--tRNA ligase.